The primary structure comprises 62 residues: Toxin Tb2-II (62 aa).

In terms of domain architecture, LCN-type CS-alpha/beta spans 1–62 (KEGYAMDHEG…KVWDYATNKC (62 aa)). Intrachain disulfides connect C11-C62, C15-C38, C23-C43, and C27-C45.

Belongs to the long (4 C-C) scorpion toxin superfamily. Sodium channel inhibitor family. Beta subfamily. As to expression, expressed by the venom gland.

The protein localises to the secreted. Its function is as follows. Beta toxins bind voltage-independently at site-4 of sodium channels (Nav) and shift the voltage of activation toward more negative potentials thereby affecting sodium channel activation and promoting spontaneous and repetitive firing. This toxin is active against both mammals and insects. In Tityus bahiensis (Brazilian scorpion), this protein is Toxin Tb2-II.